A 321-amino-acid polypeptide reads, in one-letter code: Thylakoid-associated protein sll1697 (321 aa).

The protein localises to the cellular thylakoid membrane. In Synechocystis sp. (strain ATCC 27184 / PCC 6803 / Kazusa), this protein is Thylakoid-associated protein sll1697.